Consider the following 430-residue polypeptide: DD-carboxypeptidase/endopeptidase Mpg (430 aa).

Residues histidine 295, aspartate 299, and histidine 375 each coordinate Zn(2+).

This sequence belongs to the peptidase M23B family. Monomer. Requires Zn(2+) as cofactor. In terms of processing, likely to be synthesized as a proenzyme. The cleavage of the N-terminal domain is probably required for the activation of the enzyme.

The protein resides in the cell outer membrane. Functionally, has both endopeptidase and DD-carboxypeptidase activities. Degrades cell wall peptidoglycan (PG) to allow consummate expression of pili. The polypeptide is DD-carboxypeptidase/endopeptidase Mpg (Neisseria meningitidis serogroup B (strain ATCC BAA-335 / MC58)).